Reading from the N-terminus, the 375-residue chain is Acetylornithine aminotransferase (375 aa).

Pyridoxal 5'-phosphate is bound by residues glycine 93–threonine 94 and phenylalanine 120. Arginine 123 contributes to the N(2)-acetyl-L-ornithine binding site. Pyridoxal 5'-phosphate is bound at residue aspartate 205–glutamine 208. Lysine 234 carries the post-translational modification N6-(pyridoxal phosphate)lysine. Threonine 262 is a binding site for N(2)-acetyl-L-ornithine. Position 263 (threonine 263) interacts with pyridoxal 5'-phosphate.

It belongs to the class-III pyridoxal-phosphate-dependent aminotransferase family. ArgD subfamily. In terms of assembly, homodimer. Pyridoxal 5'-phosphate is required as a cofactor.

It localises to the cytoplasm. It carries out the reaction N(2)-acetyl-L-ornithine + 2-oxoglutarate = N-acetyl-L-glutamate 5-semialdehyde + L-glutamate. It functions in the pathway amino-acid biosynthesis; L-arginine biosynthesis; N(2)-acetyl-L-ornithine from L-glutamate: step 4/4. This Staphylococcus epidermidis (strain ATCC 12228 / FDA PCI 1200) protein is Acetylornithine aminotransferase.